The sequence spans 635 residues: Threonine--tRNA ligase (635 aa).

Positions 1 to 62 (MITITLPDGS…EHDAMLRIIT (62 aa)) constitute a TGS domain. The catalytic stretch occupies residues 244 to 535 (DHRKIGKVQD…LIEHYAGIWP (292 aa)). 3 residues coordinate Zn(2+): Cys335, His386, and His512.

This sequence belongs to the class-II aminoacyl-tRNA synthetase family. Homodimer. Requires Zn(2+) as cofactor.

The protein resides in the cytoplasm. It carries out the reaction tRNA(Thr) + L-threonine + ATP = L-threonyl-tRNA(Thr) + AMP + diphosphate + H(+). Functionally, catalyzes the attachment of threonine to tRNA(Thr) in a two-step reaction: L-threonine is first activated by ATP to form Thr-AMP and then transferred to the acceptor end of tRNA(Thr). Also edits incorrectly charged L-seryl-tRNA(Thr). In Xylella fastidiosa (strain 9a5c), this protein is Threonine--tRNA ligase.